Consider the following 293-residue polypeptide: 16S rRNA (guanine(1405)-N(7))-methyltransferase (293 aa).

Residues Phe47, 80–82 (HAS), Arg86, Ala111, Asp134, 160–161 (DL), Leu176, and Gln185 contribute to the S-adenosyl-L-methionine site. Low complexity predominate over residues 258 to 274 (GRPAPAEGAAEPGATRP). A disordered region spans residues 258-293 (GRPAPAEGAAEPGATRPVVDVPATARPDADRVDPTG). A compositionally biased stretch (basic and acidic residues) spans 284–293 (PDADRVDPTG).

This sequence belongs to the methyltransferase superfamily. Aminoglycoside resistance family.

It carries out the reaction guanosine(1405) in 16S rRNA + S-adenosyl-L-methionine = N(7)-methylguanosine(1405) in 16S rRNA + S-adenosyl-L-homocysteine. Specifically methylates the N(7) position of guanine 1405 in 16S rRNA. Confers resistance to aminoglycosides. In Micromonospora olivasterospora, this protein is 16S rRNA (guanine(1405)-N(7))-methyltransferase (fmrO).